A 335-amino-acid chain; its full sequence is Homeobox protein DBX1 (335 aa).

2 disordered regions span residues 58-102 and 240-335; these read IPAA…LSPA and KERE…ITVS. Positions 83–95 are enriched in low complexity; sequence GSPGSGSRRGSSP. Residues 181-240 constitute a DNA-binding region (homeobox); sequence GMLRRAVFSDVQRKALEKTFQKQKYISKPDRKKLASKLGLKDSQVKIWFQNRRMKWRNSK. Low complexity predominate over residues 299–317; sequence GPLPASPAHSSSPGKPSDF. The segment covering 318–335 has biased composition (acidic residues); it reads SDSDEDEEGEEDEEITVS.

This sequence belongs to the H2.0 homeobox family.

Its subcellular location is the nucleus. Functionally, could have a role in patterning the central nervous system during embryogenesis. Has a key role in regulating the distinct phenotypic features that distinguish two major classes of ventral interneurons, V0 and V1 neurons. Regulates the transcription factor profile, neurotransmitter phenotype, intraspinal migratory path and axonal trajectory of V0 neurons, features that differentiate them from an adjacent set of V1 neurons. This is Homeobox protein DBX1 (Dbx1) from Mus musculus (Mouse).